A 156-amino-acid polypeptide reads, in one-letter code: Small ribosomal subunit protein uS7 (156 aa).

It belongs to the universal ribosomal protein uS7 family. As to quaternary structure, part of the 30S ribosomal subunit. Contacts proteins S9 and S11.

One of the primary rRNA binding proteins, it binds directly to 16S rRNA where it nucleates assembly of the head domain of the 30S subunit. Is located at the subunit interface close to the decoding center, probably blocks exit of the E-site tRNA. The chain is Small ribosomal subunit protein uS7 from Desulfitobacterium hafniense (strain DSM 10664 / DCB-2).